We begin with the raw amino-acid sequence, 461 residues long: Asparagine--tRNA ligase (461 aa).

It belongs to the class-II aminoacyl-tRNA synthetase family. In terms of assembly, homodimer.

Its subcellular location is the cytoplasm. The catalysed reaction is tRNA(Asn) + L-asparagine + ATP = L-asparaginyl-tRNA(Asn) + AMP + diphosphate + H(+). In Geobacter sulfurreducens (strain ATCC 51573 / DSM 12127 / PCA), this protein is Asparagine--tRNA ligase.